Here is a 432-residue protein sequence, read N- to C-terminus: Hexane cyclase pydB (432 aa).

The signal sequence occupies residues 1 to 20; sequence MMHQSLGLGLVVFVAAPVVA. N-linked (GlcNAc...) asparagine glycosylation is found at asparagine 59, asparagine 78, asparagine 153, and asparagine 308.

Belongs to the Diels-Alderase family.

Its pathway is mycotoxin biosynthesis. Its function is as follows. Hexane cyclase; part of the gene cluster that mediates the biosynthesis of pyrrocidines, fungal natural products containing a macrocyclic para-cyclophane connected to a decahydrofluorene ring system that show potent antibiotic activities toward Gram-negative bacteria. Within the pathway, pydB functions synergistically with pydE, pydX and pydZ to form the cyclophane. The pathway begins with the PKS-NRPS pydA which, with the help of the trans-enoyl reductase pydC, synthesizes the polyketide-tyrosyl acyl thioester product which can be reductively off-loaded by the terminal reductase (R) domain in pydA. The alpha/beta hydrolase pydG is then required to catalyze the subsequent Knoevenagel condensation that affords the 3-pyrrolin-2-one ring, whereas the four proteins pydB, pydE, pydX and pydZ then function synergistically to form the cyclophane. PydB and the membrane-bound pydX and pydZ are lipid-binding proteins that can sequester and mold the pdyG product into the inverse S-shape. Binding of the medium chain reductase pydE to the complex would trigger the cascade oxidative cyclization. PydY is involved the Diels-Alder cycloaddition that forms the decahydrofluorene core. Additional non-enzymatic hydroxylation yields pyrrocidine A2 which can be further reduced into pyrrocidine B by an endogenous reductase. This Acremonium sp protein is Hexane cyclase pydB.